Reading from the N-terminus, the 365-residue chain is Phosphatidylcholine:ceramide cholinephosphotransferase 2 (365 aa).

A disordered region spans residues 9–50 (LEGHLESQTNNSTNTYTSPTEAVEEEDKNGKGKPKTLSNGLR). The span at 15 to 28 (SQTNNSTNTYTSPT) shows a compositional bias: low complexity. 5 helical membrane passes run 80 to 100 (GIAFVYALFNLILTTVMITVV), 128 to 148 (FSVSEINGMVLVGLWLTQWLF), 159 to 179 (FFFIMGTLYLYRCITMYVTTL), 219 to 239 (ILCGDFLFSGHTVVLTLTYLF), and 248 to 268 (FWWYHLVCWLLSAAGIICILV). The active site involves H229. Catalysis depends on residues H272 and D276. The chain crosses the membrane as a helical span at residues 273 to 290 (YTVDVIIAYYITTRLFWW). At 291–365 (YHSMANEKNL…KIGEDNEKST (75 aa)) the chain is on the cytoplasmic side. 4 S-palmitoyl cysteine lipidation sites follow: C331, C332, C343, and C348.

This sequence belongs to the sphingomyelin synthase family. In terms of processing, palmitoylated on Cys-331, Cys-332, Cys-343 and Cys-348; which plays an important role in plasma membrane localization. As to expression, expression restricted to late round spermatids and elongating spermatids but not detected in late elongate spermatids and Sertoli cells (at protein level).

The protein resides in the cell membrane. It localises to the golgi apparatus membrane. It catalyses the reaction an N-acylsphing-4-enine + a 1,2-diacyl-sn-glycero-3-phosphocholine = a sphingomyelin + a 1,2-diacyl-sn-glycerol. It carries out the reaction an N-acylsphinganine + a 1,2-diacyl-sn-glycero-3-phosphocholine = an N-acylsphinganine-1-phosphocholine + a 1,2-diacyl-sn-glycerol. The catalysed reaction is an N-acyl-(4R)-4-hydroxysphinganine + a 1,2-diacyl-sn-glycero-3-phosphocholine = an N-acyl-(4R)-4-hydroxysphinganine-phosphocholine + a 1,2-diacyl-sn-glycerol. The enzyme catalyses an N-acylsphing-4-enine + a 1,2-diacyl-sn-glycero-3-phosphoethanolamine = an N-acylsphing-4-enine 1-phosphoethanolamine + a 1,2-diacyl-sn-glycerol. It catalyses the reaction an N-acylsphinganine + a 1,2-diacyl-sn-glycero-3-phosphoethanolamine = an N-acylsphinganine-1-phosphoethanolamine + a 1,2-diacyl-sn-glycerol. It carries out the reaction an N-acyl-(4R)-4-hydroxysphinganine + a 1,2-diacyl-sn-glycero-3-phosphoethanolamine = an N-acyl-(4R)-4-hydroxysphinganine-1-phosphoethanolamine + a 1,2-diacyl-sn-glycerol. The catalysed reaction is 1,2-dihexadecanoyl-sn-glycero-3-phosphocholine + an N-acylsphing-4-enine = 1,2-dihexadecanoyl-sn-glycerol + a sphingomyelin. The enzyme catalyses 1-(9Z-octadecenoyl)-2-acyl-sn-3-glycerol + a sphingomyelin = a 1-(9Z-octadecenoyl)-2-acyl-sn-glycero-3-phosphocholine + an N-acylsphing-4-enine. It catalyses the reaction N-hexadecanoylsphinganine + a 1,2-diacyl-sn-glycero-3-phosphocholine = N-hexadecanoyl-sphinganine-1-phosphocholine + a 1,2-diacyl-sn-glycerol. It carries out the reaction N-hexadecanoyl-(4R)-hydroxysphinganine + a 1,2-diacyl-sn-glycero-3-phosphocholine = N-hexadecanoyl-(4R)-hydroxysphinganine-phosphocholine + a 1,2-diacyl-sn-glycerol. The catalysed reaction is N-hexadecanoylsphinganine + a 1,2-diacyl-sn-glycero-3-phosphoethanolamine = N-hexadecanoyl-sphinganine-1-phosphoethanolamine + a 1,2-diacyl-sn-glycerol. The enzyme catalyses N-hexadecanoyl-(4R)-hydroxysphinganine + a 1,2-diacyl-sn-glycero-3-phosphoethanolamine = N-hexadecanoyl-(4R)-hydroxysphinganine-1-phosphoethanolamine + a 1,2-diacyl-sn-glycerol. Its pathway is sphingolipid metabolism. Its function is as follows. Sphingomyelin synthase that primarily contributes to sphingomyelin synthesis and homeostasis at the plasma membrane. Catalyzes the reversible transfer of phosphocholine moiety in sphingomyelin biosynthesis: in the forward reaction transfers phosphocholine head group of phosphatidylcholine (PC) on to ceramide (CER) to form ceramide phosphocholine (sphingomyelin, SM) and diacylglycerol (DAG) as by-product, and in the reverse reaction transfers phosphocholine from SM to DAG to form PC and CER. The direction of the reaction appears to depend on the levels of CER and DAG in the plasma membrane. Does not use free phosphorylcholine or CDP-choline as donors. Can also transfer phosphoethanolamine head group of phosphatidylethanolamine (PE) on to ceramide (CER) to form ceramide phosphoethanolamine (CPE). Regulates receptor-mediated signal transduction via mitogenic DAG and proapoptotic CER, as well as via SM, a structural component of membrane rafts that serve as platforms for signal transduction and protein sorting. To a lesser extent, plays a role in secretory transport via regulation of DAG pool at the Golgi apparatus and its downstream effects on PRKD1. Required for normal bone matrix mineralization. The chain is Phosphatidylcholine:ceramide cholinephosphotransferase 2 (Sgms2) from Rattus norvegicus (Rat).